A 126-amino-acid polypeptide reads, in one-letter code: MNVVKSLCILGLVLVSLIATQAADEQVVGGVSQLEGNSRKEALELLDATLAQLATGDGPSYKAINVTSVTGQVVAGSLNTYEVELDNGSDKKQCTVKIWTQPWLKENGTNIKIKCSGDDGELDRTW.

The Secondary area of contact motif lies at 72 to 76 (QVVAG). A disulfide bond links Cys94 and Cys115.

The protein belongs to the cystatin family.

In Drosophila melanogaster (Fruit fly), this protein is Cystatin-like protein (Cys).